The sequence spans 137 residues: Large ribosomal subunit protein uL16 (137 aa).

This sequence belongs to the universal ribosomal protein uL16 family. In terms of assembly, part of the 50S ribosomal subunit.

In terms of biological role, binds 23S rRNA and is also seen to make contacts with the A and possibly P site tRNAs. This is Large ribosomal subunit protein uL16 from Pseudomonas aeruginosa (strain LESB58).